A 216-amino-acid chain; its full sequence is Octanoyltransferase (216 aa).

A BPL/LPL catalytic domain is found at 24–212; sequence KFRKECILFL…NLCSFLEPIN (189 aa). Residues 69–76, 140–142, and 153–155 contribute to the substrate site; these read RGGDFTAH, SIG, and GIA. C171 serves as the catalytic Acyl-thioester intermediate.

It belongs to the LipB family.

It localises to the cytoplasm. The catalysed reaction is octanoyl-[ACP] + L-lysyl-[protein] = N(6)-octanoyl-L-lysyl-[protein] + holo-[ACP] + H(+). It functions in the pathway protein modification; protein lipoylation via endogenous pathway; protein N(6)-(lipoyl)lysine from octanoyl-[acyl-carrier-protein]: step 1/2. Functionally, catalyzes the transfer of endogenously produced octanoic acid from octanoyl-acyl-carrier-protein onto the lipoyl domains of lipoate-dependent enzymes. Lipoyl-ACP can also act as a substrate although octanoyl-ACP is likely to be the physiological substrate. The polypeptide is Octanoyltransferase (Leptospira interrogans serogroup Icterohaemorrhagiae serovar Lai (strain 56601)).